Consider the following 201-residue polypeptide: Proteasome subunit beta 1 (201 aa).

Residue methionine 1 is a propeptide, removed in mature form; by autocatalysis. The active-site Nucleophile is threonine 2.

This sequence belongs to the peptidase T1B family. The 20S proteasome core is composed of 14 alpha and 14 beta subunits that assemble into four stacked heptameric rings, resulting in a barrel-shaped structure. The two inner rings, each composed of seven catalytic beta subunits, are sandwiched by two outer rings, each composed of seven alpha subunits. The catalytic chamber with the active sites is on the inside of the barrel. Has a gated structure, the ends of the cylinder being occluded by the N-termini of the alpha-subunits. Is capped at one or both ends by the proteasome regulatory ATPase, PAN.

It localises to the cytoplasm. It carries out the reaction Cleavage of peptide bonds with very broad specificity.. The formation of the proteasomal ATPase PAN-20S proteasome complex, via the docking of the C-termini of PAN into the intersubunit pockets in the alpha-rings, triggers opening of the gate for substrate entry. Interconversion between the open-gate and close-gate conformations leads to a dynamic regulation of the 20S proteasome proteolysis activity. Component of the proteasome core, a large protease complex with broad specificity involved in protein degradation. The chain is Proteasome subunit beta 1 from Pyrobaculum calidifontis (strain DSM 21063 / JCM 11548 / VA1).